The following is a 468-amino-acid chain: 3-isopropylmalate dehydratase large subunit (468 aa).

Residues Cys-349, Cys-409, and Cys-412 each contribute to the [4Fe-4S] cluster site.

It belongs to the aconitase/IPM isomerase family. LeuC type 1 subfamily. In terms of assembly, heterodimer of LeuC and LeuD. [4Fe-4S] cluster serves as cofactor.

The enzyme catalyses (2R,3S)-3-isopropylmalate = (2S)-2-isopropylmalate. It participates in amino-acid biosynthesis; L-leucine biosynthesis; L-leucine from 3-methyl-2-oxobutanoate: step 2/4. Its function is as follows. Catalyzes the isomerization between 2-isopropylmalate and 3-isopropylmalate, via the formation of 2-isopropylmaleate. The chain is 3-isopropylmalate dehydratase large subunit from Nitrobacter winogradskyi (strain ATCC 25391 / DSM 10237 / CIP 104748 / NCIMB 11846 / Nb-255).